Reading from the N-terminus, the 417-residue chain is NADH-dependent phenylglyoxylate dehydrogenase subunit alpha (417 aa).

In terms of assembly, dimer of heteropentamers composed of an alpha (PadG), a beta (PadI), a gamma (PadE), a delta (PadF) and an epsilon (PadH) subunit.

It catalyses the reaction phenylglyoxylate + NAD(+) + CoA = benzoyl-CoA + CO2 + NADH. With respect to regulation, activated by magnesium ions and thiamine diphosphate. Involved in the anaerobic metabolism of phenylalanine and phenylacetate. Catalyzes the oxidative decarboxylation of phenylglyoxylate to benzoyl-CoA and CO(2). It can also react slowly with 2-oxo-3-methylbutanoate and use different electron acceptors such as benzyl viologen, methyl viologen, FAD or FMN, but NAD seems to be the physiological electron acceptor. Also catalyzes an isotope exchange between CO(2) and the carboxyl group which proves partial or complete reversibility of the oxidative decarboxylation reaction. In Aromatoleum evansii (Azoarcus evansii), this protein is NADH-dependent phenylglyoxylate dehydrogenase subunit alpha (padG).